The primary structure comprises 532 residues: Muscarinic acetylcholine receptor M5 (532 aa).

The Extracellular portion of the chain corresponds to 1–29 (MEGESYHNETTVNGTPVNHQALERHGLWE). N-linked (GlcNAc...) asparagine glycosylation occurs at Asn8. The helical transmembrane segment at 30 to 53 (VITIAAVTAVVSLMTIVGNVLVMI) threads the bilayer. Residues 54-66 (SFKVNSQLKTVNN) are Cytoplasmic-facing. Residues 67–87 (YYLLSLACADLIIGIFSMNLY) traverse the membrane as a helical segment. The Extracellular portion of the chain corresponds to 88 to 104 (TTYILMGRWVLGSLACD). A disulfide bridge connects residues Cys103 and Cys183. Residues 105-126 (LWLALDYVASNASVMNLLVISF) traverse the membrane as a helical segment. At 127 to 146 (DRYFSITRPLTYRAKRTPKR) the chain is on the cytoplasmic side. A helical transmembrane segment spans residues 147-169 (AGIMIGLAWLVSFILWAPAILCW). Residues 170 to 191 (QYLVGKRTVPPDECQIQFLSEP) are Extracellular-facing. A helical transmembrane segment spans residues 192–214 (TITFGTAIAAFYIPVSVMTILYC). Over 215-443 (RIYRETEKRT…LVKERKAAQT (229 aa)) the chain is Cytoplasmic. Positions 265–290 (VRNQASWSSSRRSTSTTGKPTQATDL) are disordered. Low complexity predominate over residues 270-281 (SWSSSRRSTSTT). Residues 444–464 (LSAILLAFIITWTPYNIMVLV) traverse the membrane as a helical segment. The Extracellular portion of the chain corresponds to 465-478 (STFCDKCVPVTLWH). A helical membrane pass occupies residues 479-498 (LGYWLCYVNSTINPICYALC). Over 499 to 532 (NRTFRKTFKLLLLCRWKKKKVEEKLYWQGNSKLP) the chain is Cytoplasmic. Phosphothreonine occurs at positions 501 and 505.

The protein belongs to the G-protein coupled receptor 1 family. Muscarinic acetylcholine receptor subfamily. CHRM5 sub-subfamily.

The protein resides in the cell membrane. Its subcellular location is the postsynaptic cell membrane. The muscarinic acetylcholine receptor mediates various cellular responses, including inhibition of adenylate cyclase, breakdown of phosphoinositides and modulation of potassium channels through the action of G proteins. Primary transducing effect is Pi turnover. The sequence is that of Muscarinic acetylcholine receptor M5 (Chrm5) from Mus musculus (Mouse).